The chain runs to 832 residues: Prickle-like protein 1 (832 aa).

Positions 14–122 (FGCQRSSTSD…TIKLLSRAVM (109 aa)) constitute a PET domain. LIM zinc-binding domains are found at residues 124 to 188 (AVCE…ELLK), 189 to 249 (PRCS…LYAE), and 250 to 313 (YCET…EDIH). A disordered region spans residues 314-342 (ASDSSDSAFQSARSRDSRRSVRMGRSSRS). Phosphoserine occurs at positions 315, 592, and 595. Disordered stretches follow at residues 663–688 (HFEE…DNAL) and 765–832 (SSST…CIIS). Over residues 670-681 (RPHHHRHRRSRK) the composition is skewed to basic residues. Ser684 is modified (phosphoserine). The span at 798 to 815 (DLSSPASALPTPQFTQRT) shows a compositional bias: polar residues. The span at 816–832 (TKSKKKKGHKGKNCIIS) shows a compositional bias: basic residues. Cys829 carries the post-translational modification Cysteine methyl ester. Cys829 carries S-farnesyl cysteine lipidation. A propeptide spans 830–832 (IIS) (removed in mature form).

This sequence belongs to the prickle / espinas / testin family. As to quaternary structure, interacts with REST.

It is found in the nucleus membrane. The protein localises to the cytoplasm. It localises to the cytosol. Involved in the planar cell polarity pathway that controls convergent extension during gastrulation and neural tube closure. Convergent extension is a complex morphogenetic process during which cells elongate, move mediolaterally, and intercalate between neighboring cells, leading to convergence toward the mediolateral axis and extension along the anteroposterior axis. Necessary for nuclear localization of REST. May serve as nuclear receptor. This Mus musculus (Mouse) protein is Prickle-like protein 1 (Prickle1).